Consider the following 603-residue polypeptide: Elongation factor 4 (603 aa).

Residues 7 to 189 enclose the tr-type G domain; the sequence is SRIRNFSIIA…SIVHLVPPPE (183 aa). Residues 19-24 and 136-139 contribute to the GTP site; these read DHGKST and NKID.

The protein belongs to the TRAFAC class translation factor GTPase superfamily. Classic translation factor GTPase family. LepA subfamily.

Its subcellular location is the cell inner membrane. It catalyses the reaction GTP + H2O = GDP + phosphate + H(+). In terms of biological role, required for accurate and efficient protein synthesis under certain stress conditions. May act as a fidelity factor of the translation reaction, by catalyzing a one-codon backward translocation of tRNAs on improperly translocated ribosomes. Back-translocation proceeds from a post-translocation (POST) complex to a pre-translocation (PRE) complex, thus giving elongation factor G a second chance to translocate the tRNAs correctly. Binds to ribosomes in a GTP-dependent manner. This Acaryochloris marina (strain MBIC 11017) protein is Elongation factor 4.